Here is a 2523-residue protein sequence, read N- to C-terminus: uncharacterized protein (2523 aa).

It belongs to the mycobacterial PPE family.

Probably plays a role in host phagosome maturation arrest. This is an uncharacterized protein from Mycobacterium tuberculosis (strain ATCC 25618 / H37Rv).